An 81-amino-acid polypeptide reads, in one-letter code: Short neurotoxin 1 (81 aa).

Residues 1–21 (MKTLLLTLVVVTIVCLDLGYT) form the signal peptide. 4 disulfide bridges follow: cysteine 24/cysteine 43, cysteine 38/cysteine 60, cysteine 62/cysteine 73, and cysteine 74/cysteine 79.

It belongs to the three-finger toxin family. Short-chain subfamily. Type I alpha-neurotoxin sub-subfamily. In terms of tissue distribution, expressed by the venom gland.

The protein resides in the secreted. Binds to muscle nicotinic acetylcholine receptor (nAChR) and inhibit acetylcholine from binding to the receptor, thereby impairing neuromuscular transmission. In Hoplocephalus stephensii (Stephens's banded snake), this protein is Short neurotoxin 1.